The primary structure comprises 100 residues: Chorion class A protein M2774 (100 aa).

The interval G1–G33 is left arm. Residues S34–I81 form a central domain region. The tract at residues C82–Y100 is right arm.

This sequence belongs to the chorion protein family.

Functionally, this protein is one of many from the eggshell of the silk moth. The sequence is that of Chorion class A protein M2774 from Bombyx mori (Silk moth).